A 184-amino-acid chain; its full sequence is Signal peptidase I S (184 aa).

Topologically, residues methionine 1–alanine 18 are cytoplasmic. Residues isoleucine 19–valine 39 form a helical membrane-spanning segment. At aspartate 40–asparagine 184 the chain is on the extracellular side. Catalysis depends on residues serine 43 and lysine 83.

The protein belongs to the peptidase S26 family.

The protein localises to the cell membrane. The catalysed reaction is Cleavage of hydrophobic, N-terminal signal or leader sequences from secreted and periplasmic proteins.. Its function is as follows. Not essential for cell viability, but required for efficient secretion of many proteins. The polypeptide is Signal peptidase I S (sipS) (Bacillus subtilis (strain 168)).